A 172-amino-acid polypeptide reads, in one-letter code: MTYYNVGKIVNTQGLQGELRVLSVTDFTDERFKKKSVLALFDDKDNYIMDVEVASHRKHKNFDIVKFKGLYHINDVEKYKGCSLKIAEENLTDLDDGEFYYHEIIGLDVYEGNTLIGQVKEILQPGANDVWVVKRKGKKDLLLPYIPPVVLDVDVAAGRIEVELMEGLDDED.

One can recognise a PRC barrel domain in the interval 96–168 (DGEFYYHEII…RIEVELMEGL (73 aa)).

It belongs to the RimM family. Binds ribosomal protein uS19.

Its subcellular location is the cytoplasm. Functionally, an accessory protein needed during the final step in the assembly of 30S ribosomal subunit, possibly for assembly of the head region. Essential for efficient processing of 16S rRNA. May be needed both before and after RbfA during the maturation of 16S rRNA. It has affinity for free ribosomal 30S subunits but not for 70S ribosomes. This Streptococcus thermophilus (strain ATCC BAA-491 / LMD-9) protein is Ribosome maturation factor RimM.